Here is a 459-residue protein sequence, read N- to C-terminus: Glycosyl hydrolase family 109 protein (459 aa).

Positions methionine 1 to alanine 31 form a signal peptide, tat-type signal. NAD(+) is bound by residues glutamate 64–arginine 65, aspartate 86, tryptophan 135–histidine 138, glutamate 155–valine 156, and asparagine 184. Substrate is bound by residues tyrosine 213, arginine 232, tyrosine 244 to histidine 247, and tyrosine 326. Residue tyrosine 244 participates in NAD(+) binding.

Belongs to the Gfo/Idh/MocA family. Glycosyl hydrolase 109 subfamily. The cofactor is NAD(+). Post-translationally, predicted to be exported by the Tat system. The position of the signal peptide cleavage has not been experimentally proven.

In terms of biological role, glycosidase. This chain is Glycosyl hydrolase family 109 protein, found in Shewanella baltica (strain OS195).